Reading from the N-terminus, the 295-residue chain is Methionine aminopeptidase (295 aa).

Substrate is bound at residue H63. The a divalent metal cation site is built by D83, D94, and H154. H162 serves as a coordination point for substrate. A divalent metal cation contacts are provided by E188 and E281.

It belongs to the peptidase M24A family. Methionine aminopeptidase archaeal type 2 subfamily. As to quaternary structure, monomer. Requires Co(2+) as cofactor. The cofactor is Zn(2+). It depends on Mn(2+) as a cofactor. Fe(2+) serves as cofactor.

It catalyses the reaction Release of N-terminal amino acids, preferentially methionine, from peptides and arylamides.. In terms of biological role, removes the N-terminal methionine from nascent proteins. The N-terminal methionine is often cleaved when the second residue in the primary sequence is small and uncharged (Met-Ala-, Cys, Gly, Pro, Ser, Thr, or Val). The sequence is that of Methionine aminopeptidase from Thermococcus kodakarensis (strain ATCC BAA-918 / JCM 12380 / KOD1) (Pyrococcus kodakaraensis (strain KOD1)).